The chain runs to 141 residues: Cystatin-S (141 aa).

Residues 1–20 (MARPLCTLLLLMATLAGALA) form the signal peptide. Phosphoserine is present on residues S21 and S23. Positions 76 to 80 (QTFGG) match the Secondary area of contact motif. Cystine bridges form between C94/C104 and C118/C138.

Belongs to the cystatin family. In terms of processing, phosphorylated at both its N- and C-terminal regions. As to expression, expressed in submandibular and sublingual saliva but not in parotid saliva (at protein level). Expressed in saliva, tears, urine and seminal fluid.

It is found in the secreted. Functionally, this protein strongly inhibits papain and ficin, partially inhibits stem bromelain and bovine cathepsin C, but does not inhibit porcine cathepsin B or clostripain. Papain is inhibited non-competitively. The protein is Cystatin-S (CST4) of Homo sapiens (Human).